The following is a 300-amino-acid chain: Estradiol 17-beta-dehydrogenase 11 (300 aa).

The N-terminal stretch at 1-18 (MKILLDLLLLLPLLIVCC) is a signal peptide. Residue 40–67 (LITGAGHGIGRLTAYEFAKLKSKLVLWD) coordinates NADP(+). A substrate-binding site is contributed by Ser-172. Tyr-185 acts as the Proton acceptor in catalysis. Lys-189 is an NADP(+) binding site.

This sequence belongs to the short-chain dehydrogenases/reductases (SDR) family. 17-beta-HSD 3 subfamily.

The protein localises to the endoplasmic reticulum. It is found in the lipid droplet. It catalyses the reaction 17beta-estradiol + NAD(+) = estrone + NADH + H(+). It carries out the reaction 17beta-estradiol + NADP(+) = estrone + NADPH + H(+). In terms of biological role, can convert androstan-3-alpha,17-beta-diol (3-alpha-diol) to androsterone in vitro, suggesting that it may participate in androgen metabolism during steroidogenesis. May act by metabolizing compounds that stimulate steroid synthesis and/or by generating metabolites that inhibit it. Has no activity toward DHEA (dehydroepiandrosterone), or A-dione (4-androste-3,17-dione), and only a slight activity toward testosterone to A-dione. The sequence is that of Estradiol 17-beta-dehydrogenase 11 (HSD17B11) from Macaca fascicularis (Crab-eating macaque).